The primary structure comprises 262 residues: MNSSFSAPAKKSLGQHFLADRYYIDRIVQAVDPRPGQHLVEIGPGQGAITFPLLRKHGALTVIEFDRDLIAPLTDAAAPIGQLQIIHRDVLAVDFTAVADGTPIRLVGNLPYNISSPILFHALDHAGAVADMHFMLQKEVVDRMAAGPGSKVYGRLSVMLQAYCEVTALFVVPPGAFRPPPKVDSAVVRLVPRDAASVLIKDRKRFADVVRAGFGQRRKTLRNALSTVCEPAHFEAAGVRPDARAEQLEVADFIRLANVELA.

Residues H16, L18, G43, E64, D89, and N109 each coordinate S-adenosyl-L-methionine.

This sequence belongs to the class I-like SAM-binding methyltransferase superfamily. rRNA adenine N(6)-methyltransferase family. RsmA subfamily.

The protein resides in the cytoplasm. It catalyses the reaction adenosine(1518)/adenosine(1519) in 16S rRNA + 4 S-adenosyl-L-methionine = N(6)-dimethyladenosine(1518)/N(6)-dimethyladenosine(1519) in 16S rRNA + 4 S-adenosyl-L-homocysteine + 4 H(+). In terms of biological role, specifically dimethylates two adjacent adenosines (A1518 and A1519) in the loop of a conserved hairpin near the 3'-end of 16S rRNA in the 30S particle. May play a critical role in biogenesis of 30S subunits. This chain is Ribosomal RNA small subunit methyltransferase A, found in Xanthomonas campestris pv. campestris (strain 8004).